A 473-amino-acid polypeptide reads, in one-letter code: Reticulon-4 receptor (473 aa).

The first 26 residues, 1 to 26 (MKRASSGGSRLLAWVLWLQAWRVATP), serve as a signal peptide directing secretion. Cystine bridges form between Cys-27–Cys-33 and Cys-31–Cys-43. Positions 27 to 57 (CPGACVCYNEPKVTTSCPQQGLQAVPTGIPA) constitute an LRRNT domain. LRR repeat units follow at residues 56 to 79 (PASS…SFQS), 80 to 103 (CRNL…AFTG), 105 to 128 (TLLE…TFRG), 129 to 152 (LGHL…LFRG), 153 to 176 (LAAL…TFRD), 178 to 200 (GNLT…AFRG), 202 to 224 (HSLD…AFRD), 225 to 248 (LGRL…VLVP), and 250 to 273 (RSLQ…PLWA). N-linked (GlcNAc...) asparagine glycosylation is present at Asn-82. The region spanning 260-310 (NPWVCDCRARPLWAWLQKFRGSSSEVPCNLPQRLAGRDLKRLAASDLEGCA) is the LRRCT domain. Disulfide bonds link Cys-264-Cys-287, Cys-266-Cys-335, and Cys-309-Cys-336. The interval 346 to 446 (VLEPGRPASA…GSSGTGDAEG (101 aa)) is disordered. Residue Asn-372 is glycosylated (N-linked (GlcNAc...) asparagine). Residues 413–429 (PRRRPGCSRKNRTRSHC) show a composition bias toward basic residues. The span at 434 to 445 (AGSGSSGTGDAE) shows a compositional bias: gly residues. Ser-447 carries GPI-anchor amidated serine lipidation. The propeptide at 448–473 (GALPALACSLAPLGLALVLWTVLGPC) is removed in mature form.

It belongs to the Nogo receptor family. Homodimer. Interacts with MAG. Interacts with RTN4 and OMG. Interacts with LINGO1 and NGFR. Interacts with KIAA0319L. Interacts with OLFM1; this inhibits interaction with LINGO1 and NGFR. Post-translationally, N-glycosylated. O-glycosylated. Contains terminal sialic acid groups on its glycan chains. As to expression, detected in embryonic cerebellum, in spinal cord motor neurons and in dorsal root ganglia. Detected in adult brain, in neocortex, hippocampus, striatum, thalamus and dorsal root ganglion neurons (at protein level).

The protein resides in the cell membrane. The protein localises to the membrane raft. It localises to the cell projection. Its subcellular location is the dendrite. It is found in the perikaryon. The protein resides in the axon. Receptor for RTN4, OMG and MAG. Functions as a receptor for the sialylated gangliosides GT1b and GM1. Besides, functions as a receptor for chondroitin sulfate proteoglycans. Can also bind heparin. Intracellular signaling cascades are triggered via the coreceptor NGFR. Signaling mediates activation of Rho and downstream reorganization of the actin cytoskeleton. Mediates axonal growth inhibition. May play a role in regulating axon regeneration and neuronal plasticity in the adult central nervous system. Plays a role in postnatal brain development. Required for normal axon migration across the brain midline and normal formation of the corpus callosum. Protects motoneurons against apoptosis; protection against apoptosis is probably mediated via interaction with MAG. Acts in conjunction with RTN4 and LINGO1 in regulating neuronal precursor cell motility during cortical development. Like other family members, plays a role in restricting the number dendritic spines and the number of synapses that are formed during brain development. The protein is Reticulon-4 receptor (Rtn4r) of Rattus norvegicus (Rat).